The primary structure comprises 123 residues: NADH-quinone oxidoreductase subunit A (123 aa).

The next 3 helical transmembrane spans lie at 11 to 31, 64 to 84, and 93 to 113; these read YLPI…IMIL, ICFY…AFLV, and IGKI…IGFI.

The protein belongs to the complex I subunit 3 family. As to quaternary structure, NDH-1 is composed of 14 different subunits. Subunits NuoA, H, J, K, L, M, N constitute the membrane sector of the complex.

It is found in the cell inner membrane. It carries out the reaction a quinone + NADH + 5 H(+)(in) = a quinol + NAD(+) + 4 H(+)(out). In terms of biological role, NDH-1 shuttles electrons from NADH, via FMN and iron-sulfur (Fe-S) centers, to quinones in the respiratory chain. The immediate electron acceptor for the enzyme in this species is believed to be ubiquinone. Couples the redox reaction to proton translocation (for every two electrons transferred, four hydrogen ions are translocated across the cytoplasmic membrane), and thus conserves the redox energy in a proton gradient. The sequence is that of NADH-quinone oxidoreductase subunit A from Rickettsia conorii (strain ATCC VR-613 / Malish 7).